Consider the following 147-residue polypeptide: Hemoglobin subunit epsilon (147 aa).

The Globin domain maps to 3 to 147 (HFTAEEKAAI…VAIALGHKYH (145 aa)). Ser-14 and Ser-51 each carry phosphoserine. Heme b is bound by residues His-64 and His-93.

It belongs to the globin family. As to quaternary structure, heterotetramer of two alpha chains and two epsilon chains in early embryonic hemoglobin Gower-2; two zeta chains and two epsilon chains in early embryonic hemoglobin Gower-1. As to expression, red blood cells.

Its function is as follows. The epsilon chain is a beta-type chain of early mammalian embryonic hemoglobin. In Alouatta belzebul (Red-handed howler monkey), this protein is Hemoglobin subunit epsilon (HBE1).